The sequence spans 494 residues: Aspartyl/glutamyl-tRNA(Asn/Gln) amidotransferase subunit B (494 aa).

This sequence belongs to the GatB/GatE family. GatB subfamily. In terms of assembly, heterotrimer of A, B and C subunits.

It catalyses the reaction L-glutamyl-tRNA(Gln) + L-glutamine + ATP + H2O = L-glutaminyl-tRNA(Gln) + L-glutamate + ADP + phosphate + H(+). The catalysed reaction is L-aspartyl-tRNA(Asn) + L-glutamine + ATP + H2O = L-asparaginyl-tRNA(Asn) + L-glutamate + ADP + phosphate + 2 H(+). Its function is as follows. Allows the formation of correctly charged Asn-tRNA(Asn) or Gln-tRNA(Gln) through the transamidation of misacylated Asp-tRNA(Asn) or Glu-tRNA(Gln) in organisms which lack either or both of asparaginyl-tRNA or glutaminyl-tRNA synthetases. The reaction takes place in the presence of glutamine and ATP through an activated phospho-Asp-tRNA(Asn) or phospho-Glu-tRNA(Gln). The protein is Aspartyl/glutamyl-tRNA(Asn/Gln) amidotransferase subunit B of Synechococcus sp. (strain CC9605).